The primary structure comprises 299 residues: Recombination-associated protein RdgC (299 aa).

Belongs to the RdgC family.

Its subcellular location is the cytoplasm. It localises to the nucleoid. Its function is as follows. May be involved in recombination. This chain is Recombination-associated protein RdgC, found in Neisseria meningitidis serogroup B (strain ATCC BAA-335 / MC58).